A 475-amino-acid polypeptide reads, in one-letter code: Ribulose bisphosphate carboxylase large chain (475 aa).

The propeptide occupies 1–2 (MS). P3 carries the N-acetylproline modification. N6,N6,N6-trimethyllysine is present on K14. N123 and T173 together coordinate substrate. Residue K175 is the Proton acceptor of the active site. Position 177 (K177) interacts with substrate. Residues K201, D203, and E204 each contribute to the Mg(2+) site. At K201 the chain carries N6-carboxylysine. Catalysis depends on H294, which acts as the Proton acceptor. The substrate site is built by R295, H327, and S379.

Belongs to the RuBisCO large chain family. Type I subfamily. In terms of assembly, heterohexadecamer of 8 large chains and 8 small chains; disulfide-linked. The disulfide link is formed within the large subunit homodimers. Requires Mg(2+) as cofactor. In terms of processing, the disulfide bond which can form in the large chain dimeric partners within the hexadecamer appears to be associated with oxidative stress and protein turnover.

The protein resides in the plastid. Its subcellular location is the chloroplast. The catalysed reaction is 2 (2R)-3-phosphoglycerate + 2 H(+) = D-ribulose 1,5-bisphosphate + CO2 + H2O. The enzyme catalyses D-ribulose 1,5-bisphosphate + O2 = 2-phosphoglycolate + (2R)-3-phosphoglycerate + 2 H(+). Its function is as follows. RuBisCO catalyzes two reactions: the carboxylation of D-ribulose 1,5-bisphosphate, the primary event in carbon dioxide fixation, as well as the oxidative fragmentation of the pentose substrate in the photorespiration process. Both reactions occur simultaneously and in competition at the same active site. This Picea sitchensis (Sitka spruce) protein is Ribulose bisphosphate carboxylase large chain.